Here is a 242-residue protein sequence, read N- to C-terminus: Ras-like protein family member 11A (242 aa).

The interval Glu-17 to Leu-241 is small GTPase-like. Residues Gly-34–Ser-41, Asp-81–Gly-85, and Asn-147–Asp-150 each bind GTP.

It belongs to the small GTPase superfamily. Ras family. As to quaternary structure, interacts with UBF/UBTF.

It localises to the nucleus. Its subcellular location is the nucleolus. The enzyme catalyses GTP + H2O = GDP + phosphate + H(+). Regulator of rDNA transcription. Acts in cooperation UBF/UBTF and positively regulates RNA polymerase I transcription. In Rattus norvegicus (Rat), this protein is Ras-like protein family member 11A.